We begin with the raw amino-acid sequence, 291 residues long: BTB/POZ domain-containing protein 19 (291 aa).

Residues 29–98 form the BTB domain; sequence SDVCFVVGQE…LYTNSVKLYR (70 aa). The BACK domain maps to 134-234; that stretch reads CEALQVAVTF…LALLAPAELS (101 aa).

The chain is BTB/POZ domain-containing protein 19 (BTBD19) from Homo sapiens (Human).